The following is a 135-amino-acid chain: MILSDEKCDFLESIASFLSPKDVELVFVDSKEMQEINLEQRKQDKTTDVLSFPLENIDESLPLGSVVINVDLAKEKAKELGHSYEEEISLLFIHAMLHLLGFDHENDNGEMREKEKELIEHFNLPKSLIVRTLED.

Zn(2+)-binding residues include H94, H98, and H104.

The protein belongs to the endoribonuclease YbeY family. Zn(2+) serves as cofactor.

It is found in the cytoplasm. Its function is as follows. Single strand-specific metallo-endoribonuclease involved in late-stage 70S ribosome quality control and in maturation of the 3' terminus of the 16S rRNA. The chain is Endoribonuclease YbeY from Campylobacter jejuni subsp. jejuni serotype O:2 (strain ATCC 700819 / NCTC 11168).